The chain runs to 355 residues: Serpentine receptor class epsilon-1 (355 aa).

The next 7 membrane-spanning stretches (helical) occupy residues 28 to 48 (FELLAMIIEIPSFLLVIYATI), 56 to 76 (LNFIGLFMLLGYYVFLVGRFI), 102 to 122 (ILSSILQFFYMGCACGISLAV), 144 to 164 (ISLFLCSEFTVACGVSAIVML), 172 to 192 (VMAFLGVFISCASFLFYLVLF), 232 to 252 (VVLFSGVNNFVMAIILTMYMS), and 268 to 288 (FAFNCCVLLYSFLMLIIIIFS).

This sequence belongs to the nematode receptor-like protein sre family.

It localises to the membrane. In Caenorhabditis elegans, this protein is Serpentine receptor class epsilon-1 (sre-1).